Here is a 620-residue protein sequence, read N- to C-terminus: Probable protein arginine N-methyltransferase 3 (620 aa).

A compositionally biased stretch (basic and acidic residues) spans 1 to 17; the sequence is MATREHELRPEQERLGE. The tract at residues 1 to 45 is disordered; the sequence is MATREHELRPEQERLGEDREEYEDGEEEEEEGEEGWDDWESDGDD. The span at 18–45 shows a compositional bias: acidic residues; it reads DREEYEDGEEEEEEGEEGWDDWESDGDD. The C2H2-type 1 zinc finger occupies 55-78; sequence LLCLFCSARFDSESSLFSHCASEH. A C2H2-type 2; degenerate zinc finger spans residues 110 to 137; that stretch reads NKCWSCGQVFSSNSELCGHLHALEIPQL. Residues 253–582 enclose the SAM-dependent MTase PRMT-type domain; sequence DESYFGSYSS…DECPAVMIRS (330 aa). S-adenosyl-L-homocysteine-binding residues include Arg-275, Gly-299, Asp-321, Ser-323, and Glu-364. Residues Glu-383 and Glu-392 contribute to the active site.

This sequence belongs to the class I-like SAM-binding methyltransferase superfamily. Protein arginine N-methyltransferase family.

It is found in the cytoplasm. The protein localises to the cytosol. It carries out the reaction L-arginyl-[protein] + S-adenosyl-L-methionine = N(omega)-methyl-L-arginyl-[protein] + S-adenosyl-L-homocysteine + H(+). The catalysed reaction is L-arginyl-[protein] + 2 S-adenosyl-L-methionine = N(omega),N(omega)-dimethyl-L-arginyl-[protein] + 2 S-adenosyl-L-homocysteine + 2 H(+). Functionally, protein-arginine N-methyltransferase that catalyzes both the monomethylation and asymmetric dimethylation of the guanidino nitrogens of arginine residues in target proteins, and therefore falls into the group of type I methyltransferases. The protein is Probable protein arginine N-methyltransferase 3 (PRMT3) of Oryza sativa subsp. japonica (Rice).